Consider the following 442-residue polypeptide: Cell cycle checkpoint control protein RAD9B (442 aa).

Disordered regions lie at residues 370–392 (EVPESDGNLSEVPESSVSDTEDV) and 422–442 (QSLATASGSEEDMNNGSFSTF). At serine 387 the chain carries Phosphoserine.

This sequence belongs to the rad9 family. In terms of assembly, interacts with HUS1, HUS1B, RAD1, RAD9A and RAD17.

In Bos taurus (Bovine), this protein is Cell cycle checkpoint control protein RAD9B (RAD9B).